The sequence spans 619 residues: Dihydroxy-acid dehydratase (619 aa).

Aspartate 81 contributes to the Mg(2+) binding site. Residue cysteine 122 coordinates [2Fe-2S] cluster. Mg(2+) contacts are provided by aspartate 123 and lysine 124. The residue at position 124 (lysine 124) is an N6-carboxylysine. Cysteine 195 is a binding site for [2Fe-2S] cluster. Glutamate 494 contacts Mg(2+). Serine 520 serves as the catalytic Proton acceptor.

Belongs to the IlvD/Edd family. In terms of assembly, homodimer. Requires [2Fe-2S] cluster as cofactor. Mg(2+) is required as a cofactor.

It carries out the reaction (2R)-2,3-dihydroxy-3-methylbutanoate = 3-methyl-2-oxobutanoate + H2O. It catalyses the reaction (2R,3R)-2,3-dihydroxy-3-methylpentanoate = (S)-3-methyl-2-oxopentanoate + H2O. It functions in the pathway amino-acid biosynthesis; L-isoleucine biosynthesis; L-isoleucine from 2-oxobutanoate: step 3/4. Its pathway is amino-acid biosynthesis; L-valine biosynthesis; L-valine from pyruvate: step 3/4. Functionally, functions in the biosynthesis of branched-chain amino acids. Catalyzes the dehydration of (2R,3R)-2,3-dihydroxy-3-methylpentanoate (2,3-dihydroxy-3-methylvalerate) into 2-oxo-3-methylpentanoate (2-oxo-3-methylvalerate) and of (2R)-2,3-dihydroxy-3-methylbutanoate (2,3-dihydroxyisovalerate) into 2-oxo-3-methylbutanoate (2-oxoisovalerate), the penultimate precursor to L-isoleucine and L-valine, respectively. The protein is Dihydroxy-acid dehydratase of Shewanella denitrificans (strain OS217 / ATCC BAA-1090 / DSM 15013).